The primary structure comprises 20 residues: Putative 18 kDa spermidine-binding protein (20 aa).

In terms of assembly, dimer of 18 kDa and 60 kDa subunit.

It is found in the microsome membrane. The protein localises to the endoplasmic reticulum membrane. May have spermidine-binding activity. This is Putative 18 kDa spermidine-binding protein from Zea mays (Maize).